Here is a 356-residue protein sequence, read N- to C-terminus: sn-glycerol-3-phosphate import ATP-binding protein UgpC (356 aa).

In terms of domain architecture, ABC transporter spans Leu4–Ile235. Residue Gly37 to Ser44 coordinates ATP.

It belongs to the ABC transporter superfamily. sn-glycerol-3-phosphate importer (TC 3.A.1.1.3) family. As to quaternary structure, the complex is composed of two ATP-binding proteins (UgpC), two transmembrane proteins (UgpA and UgpE) and a solute-binding protein (UgpB).

It localises to the cell inner membrane. The enzyme catalyses sn-glycerol 3-phosphate(out) + ATP + H2O = sn-glycerol 3-phosphate(in) + ADP + phosphate + H(+). Part of the ABC transporter complex UgpBAEC involved in sn-glycerol-3-phosphate (G3P) import. Responsible for energy coupling to the transport system. This chain is sn-glycerol-3-phosphate import ATP-binding protein UgpC, found in Escherichia coli (strain UTI89 / UPEC).